We begin with the raw amino-acid sequence, 322 residues long: Cytochrome c biogenesis protein CcsA (322 aa).

6 consecutive transmembrane segments (helical) span residues 9–29 (ILTH…LITL), 44–64 (GMIV…ASSG), 143–163 (MLLS…ILII), 226–246 (VISL…VWAN), 259–276 (ETWA…LHSR), and 289–309 (IASI…LLGI).

Belongs to the CcmF/CycK/Ccl1/NrfE/CcsA family. In terms of assembly, may interact with Ccs1.

It localises to the plastid. It is found in the chloroplast thylakoid membrane. Required during biogenesis of c-type cytochromes (cytochrome c6 and cytochrome f) at the step of heme attachment. This Triticum aestivum (Wheat) protein is Cytochrome c biogenesis protein CcsA.